The following is a 49-amino-acid chain: Large ribosomal subunit protein bL33B (49 aa).

This sequence belongs to the bacterial ribosomal protein bL33 family.

The sequence is that of Large ribosomal subunit protein bL33B from Listeria welshimeri serovar 6b (strain ATCC 35897 / DSM 20650 / CCUG 15529 / CIP 8149 / NCTC 11857 / SLCC 5334 / V8).